Consider the following 267-residue polypeptide: Thyroxine 5-deiodinase (267 aa).

At 1–15 (MHDSGGVQMARALKH) the chain is on the cytoplasmic side. A helical; Signal-anchor for type II membrane protein transmembrane segment spans residues 16 to 36 (AALCLMLLPRFLLAAVMLWLL). Residues 37-267 (DFLCIRKKVL…VNSQTAVLHV (231 aa)) are Extracellular-facing. U131 is a catalytic residue. A non-standard amino acid (selenocysteine) is located at residue U131.

The protein belongs to the iodothyronine deiodinase family. Monomer. Homodimer. May undergo minor heretodimerization with DIO1 and DIO2.

Its subcellular location is the cell membrane. The protein resides in the endosome membrane. It carries out the reaction 3,3',5'-triiodo-L-thyronine + iodide + A + H(+) = L-thyroxine + AH2. The catalysed reaction is 3,3'-diiodo-L-thyronine + iodide + A + H(+) = 3,3',5-triiodo-L-thyronine + AH2. The enzyme catalyses 3-iodo-L-thyronine + iodide + A + H(+) = 3,5-diiodo-L-thyronine + AH2. It catalyses the reaction L-thyronine + iodide + A + H(+) = 3-iodo-L-thyronine + AH2. It carries out the reaction 3',5'-diiodo-L-thyronine + iodide + A + H(+) = 3,3',5'-triiodo-L-thyronine + AH2. The catalysed reaction is 3'-iodo-L-thyronine + iodide + A + H(+) = 3,3'-diiodo-L-thyronine + AH2. The enzyme catalyses 3,3',5'-triiodothyronamine + iodide + A + H(+) = 3,3',5,5'-tetraiodothyronamine + AH2. It catalyses the reaction 3',5'-diiodothyronamine + iodide + A + H(+) = 3,3',5'-triiodothyronamine + AH2. It carries out the reaction 3,3'-diiodothyronamine + iodide + A + H(+) = 3,3',5-triiodothyronamine + AH2. The catalysed reaction is 3-iodothyronamine + iodide + A + H(+) = 3,5-diiodothyronamine + AH2. The enzyme catalyses 3'-iodothyronamine + iodide + A + H(+) = 3,3'-diiodothyronamine + AH2. It catalyses the reaction thyronamine + iodide + A + H(+) = 3-iodothyronamine + AH2. In terms of biological role, plays a crucial role in the metabolism of thyroid hormones (TH) and has specific roles in TH activation and inactivation by deiodination. Catalyzes the deiodination of L-thyroxine (T4) to 3,3',5'-triiodothyronine (rT3), 3,5,3'-triiodothyronine (T3) to 3,3'-diiodothyronine (3,3'-T2), 3,5-diiodothyronine (3,5-T2) to 3-monoiodothyronine (3-T1), rT3 to 3',5'-diiodothyronine (3',5'-T2) and 3,3'-T2 to 3'-monoiodothyronine (3'-T1) via inner-ring deiodination (IRD). Catalyzes the deiodination of 3-T1 to L-thyronine (T0) via outer-ring deiodination (ORD). Catalyzes the tyrosyl ring deiodinations of 3,3',5,5'-tetraiodothyronamine, 3,3',5'-triiodothyronamine, 3,5,3'-triiodothyronamine, 3,5-diiodothyronamine, 3,3'-diiodothyronamine and 3-iodothyronamine. The chain is Thyroxine 5-deiodinase (dio3) from Sparus aurata (Gilthead sea bream).